The primary structure comprises 188 residues: Peroxiredoxin y4vD (188 aa).

The Thioredoxin domain maps to Pro-2–Phe-152. The Cysteine sulfenic acid (-SOH) intermediate (for peroxiredoxin activity) role is filled by Cys-56.

The protein belongs to the peroxiredoxin family. Prx5 subfamily. Monomer.

The enzyme catalyses a hydroperoxide + 2 glutathione = an alcohol + glutathione disulfide + H2O. In terms of biological role, thiol-specific peroxidase that catalyzes the reduction of hydrogen peroxide and organic hydroperoxides to water and alcohols, respectively. Plays a role in cell protection against oxidative stress by detoxifying peroxides. The chain is Peroxiredoxin y4vD from Sinorhizobium fredii (strain NBRC 101917 / NGR234).